Consider the following 290-residue polypeptide: 4-hydroxybenzoate octaprenyltransferase (290 aa).

Helical transmembrane passes span Leu-33–Val-53, Leu-99–Ile-119, Leu-141–Val-161, Leu-213–Asn-233, Gly-234–Gln-254, and Ala-268–Leu-288.

The protein belongs to the UbiA prenyltransferase family. It depends on Mg(2+) as a cofactor.

The protein localises to the cell inner membrane. The catalysed reaction is all-trans-octaprenyl diphosphate + 4-hydroxybenzoate = 4-hydroxy-3-(all-trans-octaprenyl)benzoate + diphosphate. It functions in the pathway cofactor biosynthesis; ubiquinone biosynthesis. Catalyzes the prenylation of para-hydroxybenzoate (PHB) with an all-trans polyprenyl group. Mediates the second step in the final reaction sequence of ubiquinone-8 (UQ-8) biosynthesis, which is the condensation of the polyisoprenoid side chain with PHB, generating the first membrane-bound Q intermediate 3-octaprenyl-4-hydroxybenzoate. This is 4-hydroxybenzoate octaprenyltransferase from Cronobacter sakazakii (strain ATCC BAA-894) (Enterobacter sakazakii).